Here is a 181-residue protein sequence, read N- to C-terminus: ATP synthase subunit delta (181 aa).

Belongs to the ATPase delta chain family. F-type ATPases have 2 components, F(1) - the catalytic core - and F(0) - the membrane proton channel. F(1) has five subunits: alpha(3), beta(3), gamma(1), delta(1), epsilon(1). F(0) has three main subunits: a(1), b(2) and c(10-14). The alpha and beta chains form an alternating ring which encloses part of the gamma chain. F(1) is attached to F(0) by a central stalk formed by the gamma and epsilon chains, while a peripheral stalk is formed by the delta and b chains.

It is found in the cell inner membrane. In terms of biological role, f(1)F(0) ATP synthase produces ATP from ADP in the presence of a proton or sodium gradient. F-type ATPases consist of two structural domains, F(1) containing the extramembraneous catalytic core and F(0) containing the membrane proton channel, linked together by a central stalk and a peripheral stalk. During catalysis, ATP synthesis in the catalytic domain of F(1) is coupled via a rotary mechanism of the central stalk subunits to proton translocation. Its function is as follows. This protein is part of the stalk that links CF(0) to CF(1). It either transmits conformational changes from CF(0) to CF(1) or is implicated in proton conduction. This is ATP synthase subunit delta from Blochmanniella pennsylvanica (strain BPEN).